We begin with the raw amino-acid sequence, 101 residues long: Small ribosomal subunit protein uS14 (101 aa).

This sequence belongs to the universal ribosomal protein uS14 family. As to quaternary structure, part of the 30S ribosomal subunit. Contacts proteins S3 and S10.

Its function is as follows. Binds 16S rRNA, required for the assembly of 30S particles and may also be responsible for determining the conformation of the 16S rRNA at the A site. The protein is Small ribosomal subunit protein uS14 of Chelativorans sp. (strain BNC1).